A 288-amino-acid polypeptide reads, in one-letter code: Acetyl-coenzyme A carboxylase carboxyl transferase subunit beta (288 aa).

One can recognise a CoA carboxyltransferase N-terminal domain in the interval Leu34–Gln288. Zn(2+)-binding residues include Cys38, Cys41, Cys56, and Cys59. The segment at Cys38–Cys59 adopts a C4-type zinc-finger fold.

The protein belongs to the AccD/PCCB family. As to quaternary structure, acetyl-CoA carboxylase is a heterohexamer composed of biotin carboxyl carrier protein (AccB), biotin carboxylase (AccC) and two subunits each of ACCase subunit alpha (AccA) and ACCase subunit beta (AccD). Requires Zn(2+) as cofactor.

It localises to the cytoplasm. The enzyme catalyses N(6)-carboxybiotinyl-L-lysyl-[protein] + acetyl-CoA = N(6)-biotinyl-L-lysyl-[protein] + malonyl-CoA. Its pathway is lipid metabolism; malonyl-CoA biosynthesis; malonyl-CoA from acetyl-CoA: step 1/1. Functionally, component of the acetyl coenzyme A carboxylase (ACC) complex. Biotin carboxylase (BC) catalyzes the carboxylation of biotin on its carrier protein (BCCP) and then the CO(2) group is transferred by the transcarboxylase to acetyl-CoA to form malonyl-CoA. This Streptococcus pyogenes serotype M3 (strain ATCC BAA-595 / MGAS315) protein is Acetyl-coenzyme A carboxylase carboxyl transferase subunit beta.